A 358-amino-acid polypeptide reads, in one-letter code: B3 domain-containing protein Os12g0592300 (358 aa).

The TF-B3 1 DNA-binding region spans Arg-25–Ser-122. The tract at residues Tyr-148 to Ala-215 is disordered. Polar residues predominate over residues Thr-156–Lys-181. Over residues Ile-203–Ala-215 the composition is skewed to acidic residues. Positions Phe-252–Val-350 form a DNA-binding region, TF-B3 2.

It localises to the nucleus. The polypeptide is B3 domain-containing protein Os12g0592300 (Oryza sativa subsp. japonica (Rice)).